We begin with the raw amino-acid sequence, 153 residues long: Deoxyuridine 5'-triphosphate nucleotidohydrolase (153 aa).

Substrate contacts are provided by residues 71-73 (RSG), Asn84, 88-90 (TID), and Lys98.

This sequence belongs to the dUTPase family. Mg(2+) is required as a cofactor.

The enzyme catalyses dUTP + H2O = dUMP + diphosphate + H(+). It functions in the pathway pyrimidine metabolism; dUMP biosynthesis; dUMP from dCTP (dUTP route): step 2/2. Its function is as follows. This enzyme is involved in nucleotide metabolism: it produces dUMP, the immediate precursor of thymidine nucleotides and it decreases the intracellular concentration of dUTP so that uracil cannot be incorporated into DNA. In Ehrlichia canis (strain Jake), this protein is Deoxyuridine 5'-triphosphate nucleotidohydrolase.